The chain runs to 175 residues: ATP synthase subunit b 2 (175 aa).

The helical transmembrane segment at 20–40 threads the bilayer; the sequence is LIFWTTITFVLVLIILKKIAW.

This sequence belongs to the ATPase B chain family. In terms of assembly, F-type ATPases have 2 components, F(1) - the catalytic core - and F(0) - the membrane proton channel. F(1) has five subunits: alpha(3), beta(3), gamma(1), delta(1), epsilon(1). F(0) has four main subunits: a(1), b(2) and c(10-14). The alpha and beta chains form an alternating ring which encloses part of the gamma chain. F(1) is attached to F(0) by a central stalk formed by the gamma and epsilon chains, while a peripheral stalk is formed by the delta and b chains.

It localises to the cell inner membrane. Functionally, f(1)F(0) ATP synthase produces ATP from ADP in the presence of a proton or sodium gradient. F-type ATPases consist of two structural domains, F(1) containing the extramembraneous catalytic core and F(0) containing the membrane proton channel, linked together by a central stalk and a peripheral stalk. During catalysis, ATP synthesis in the catalytic domain of F(1) is coupled via a rotary mechanism of the central stalk subunits to proton translocation. In terms of biological role, component of the F(0) channel, it forms part of the peripheral stalk, linking F(1) to F(0). The sequence is that of ATP synthase subunit b 2 from Chlorobium luteolum (strain DSM 273 / BCRC 81028 / 2530) (Pelodictyon luteolum).